A 370-amino-acid chain; its full sequence is Flagellar P-ring protein (370 aa).

Positions 1 to 21 (MKYILIKLSIVMIFIINSASK) are cleaved as a signal peptide.

The protein belongs to the FlgI family. As to quaternary structure, the basal body constitutes a major portion of the flagellar organelle and consists of four rings (L,P,S, and M) mounted on a central rod.

It localises to the bacterial flagellum basal body. Its function is as follows. Assembles around the rod to form the L-ring and probably protects the motor/basal body from shearing forces during rotation. In Wigglesworthia glossinidia brevipalpis, this protein is Flagellar P-ring protein.